Here is a 147-residue protein sequence, read N- to C-terminus: D-aminoacyl-tRNA deacylase (147 aa).

The Gly-cisPro motif, important for rejection of L-amino acids signature appears at 136–137 (GP).

This sequence belongs to the DTD family. As to quaternary structure, homodimer.

The protein resides in the cytoplasm. The enzyme catalyses glycyl-tRNA(Ala) + H2O = tRNA(Ala) + glycine + H(+). It catalyses the reaction a D-aminoacyl-tRNA + H2O = a tRNA + a D-alpha-amino acid + H(+). Functionally, an aminoacyl-tRNA editing enzyme that deacylates mischarged D-aminoacyl-tRNAs. Also deacylates mischarged glycyl-tRNA(Ala), protecting cells against glycine mischarging by AlaRS. Acts via tRNA-based rather than protein-based catalysis; rejects L-amino acids rather than detecting D-amino acids in the active site. By recycling D-aminoacyl-tRNA to D-amino acids and free tRNA molecules, this enzyme counteracts the toxicity associated with the formation of D-aminoacyl-tRNA entities in vivo and helps enforce protein L-homochirality. The polypeptide is D-aminoacyl-tRNA deacylase (Streptococcus pyogenes serotype M1).